The sequence spans 499 residues: Probable cytosol aminopeptidase (499 aa).

The Mn(2+) site is built by Lys263 and Asp268. The active site involves Lys275. Asp286, Asp345, and Glu347 together coordinate Mn(2+). Arg349 is an active-site residue.

It belongs to the peptidase M17 family. Mn(2+) is required as a cofactor.

Its subcellular location is the cytoplasm. It carries out the reaction Release of an N-terminal amino acid, Xaa-|-Yaa-, in which Xaa is preferably Leu, but may be other amino acids including Pro although not Arg or Lys, and Yaa may be Pro. Amino acid amides and methyl esters are also readily hydrolyzed, but rates on arylamides are exceedingly low.. The enzyme catalyses Release of an N-terminal amino acid, preferentially leucine, but not glutamic or aspartic acids.. Its function is as follows. Presumably involved in the processing and regular turnover of intracellular proteins. Catalyzes the removal of unsubstituted N-terminal amino acids from various peptides. This Chlamydia trachomatis serovar D (strain ATCC VR-885 / DSM 19411 / UW-3/Cx) protein is Probable cytosol aminopeptidase (pepA).